A 433-amino-acid polypeptide reads, in one-letter code: Ribosome biogenesis protein WDR12 homolog (433 aa).

The interval 21-102 is ubiquitin-like (UBL) domain; that stretch reads VEVFVVSYRH…ESVISIECIV (82 aa). 7 WD repeats span residues 114–151, 153–194, 203–242, 270–310, 312–351, 357–397, and 401–433; these read ALLD…LTSS, LHEE…SSTF, GHER…TSTV, GHKD…QINT, AAKK…GTLV, GHCG…TPLY, and GHSD…RRKM.

It belongs to the WD repeat WDR12/YTM1 family.

The protein localises to the nucleus. Its subcellular location is the nucleolus. The protein resides in the nucleoplasm. Required for maturation of ribosomal RNAs and formation of the large ribosomal subunit. The sequence is that of Ribosome biogenesis protein WDR12 homolog from Brugia malayi (Filarial nematode worm).